A 413-amino-acid chain; its full sequence is Eukaryotic initiation factor 4A-11 (413 aa).

The Q motif signature appears at 40–68 (ESFDAMGLQENLLRGIYAYGFEKPSAIQQ). The Helicase ATP-binding domain occupies 71–241 (IVPFCKGLDV…RKFMNKPVRI (171 aa)). 84-91 (AQSGTGKT) is an ATP binding site. A DEAD box motif is present at residues 189–192 (DEAD). The Helicase C-terminal domain maps to 252–413 (GIKQFYVNVD…ELPANVADLL (162 aa)).

It belongs to the DEAD box helicase family. eIF4A subfamily. EIF4F is a multi-subunit complex, the composition of which varies with external and internal environmental conditions. It is composed of at least EIF4A, EIF4E and EIF4G.

The catalysed reaction is ATP + H2O = ADP + phosphate + H(+). Its function is as follows. ATP-dependent RNA helicase which is a subunit of the eIF4F complex involved in cap recognition and is required for mRNA binding to ribosome. In the current model of translation initiation, eIF4A unwinds RNA secondary structures in the 5'-UTR of mRNAs which is necessary to allow efficient binding of the small ribosomal subunit, and subsequent scanning for the initiator codon. The protein is Eukaryotic initiation factor 4A-11 of Nicotiana tabacum (Common tobacco).